We begin with the raw amino-acid sequence, 161 residues long: S-ribosylhomocysteine lyase (161 aa).

Fe cation is bound by residues His58, His62, and Cys128.

Belongs to the LuxS family. As to quaternary structure, homodimer. Fe cation serves as cofactor.

The catalysed reaction is S-(5-deoxy-D-ribos-5-yl)-L-homocysteine = (S)-4,5-dihydroxypentane-2,3-dione + L-homocysteine. In terms of biological role, involved in the synthesis of autoinducer 2 (AI-2) which is secreted by bacteria and is used to communicate both the cell density and the metabolic potential of the environment. The regulation of gene expression in response to changes in cell density is called quorum sensing. Catalyzes the transformation of S-ribosylhomocysteine (RHC) to homocysteine (HC) and 4,5-dihydroxy-2,3-pentadione (DPD). This Bifidobacterium adolescentis (strain ATCC 15703 / DSM 20083 / NCTC 11814 / E194a) protein is S-ribosylhomocysteine lyase.